We begin with the raw amino-acid sequence, 762 residues long: ABC-type oligopeptide transporter ABCB9 (762 aa).

Transmembrane regions (helical) follow at residues 7–27 (VVVT…IYAF), 47–67 (VLDL…ATIG), 84–104 (LVIT…LLLF), 116–136 (FWAL…LWGL), 181–201 (VAFL…ETFL), 221–241 (FTTA…AAGI), 315–335 (VFMF…FPII), and 412–432 (SGLT…HLVI). The ABC transmembrane type-1 domain occupies 184-467 (LVAASFFLIV…VGSVYSGLMQ (284 aa)). Positions 500 to 736 (VDFENVTFTY…GGLYAKLVQR (237 aa)) constitute an ABC transporter domain. ATP is bound at residue 535–542 (GPSGSGKS).

It belongs to the ABC transporter superfamily. ABCB family. MHC peptide exporter (TC 3.A.1.209) subfamily. In terms of assembly, homodimer. Interacts (via TMD0 region) with LAMP1; this interaction strongly stabilizes ABCB9 and protects ABCB9 against lysosomal degradation. Interacts (via TMD0 region) with LAMP2 (isoform LAMP-2B). Interacts (via TMD0) with YIF1B; this interaction allows (but is not essential) the ER-to-Golgi trafficking and strongly depends on a salt bridge within TMD0. Found in testis, particularly in the Sertoli cells of the seminiferous tubules. Also expressed in kidney, brain, heart, lung, spleen, thymus, intestine and testis. Higher expression detected in brain and testis than in thymus and intestine.

It localises to the lysosome membrane. The enzyme catalyses a [oligopeptide](in) + ATP + H2O = a [oligopeptide](out) + ADP + phosphate + H(+). In terms of biological role, ATP-dependent low-affinity peptide transporter which translocates a broad spectrum of peptides from the cytosol to the lysosomal lumen for degradation. Displays a broad peptide length specificity from 6-mer up to at least 59-mer peptides with an optimum of 23-mers. Binds and transports smaller and larger peptides with the same affinity. Favors positively charged, aromatic or hydrophobic residues in the N- and C-terminal positions whereas negatively charged residues as well as asparagine and methionine are not favored. The chain is ABC-type oligopeptide transporter ABCB9 from Rattus norvegicus (Rat).